The following is an 880-amino-acid chain: Endoglucanase E-4 (880 aa).

Residues 1-46 form the signal peptide; sequence MSVTEPPPRRRGRHSRARRFLTSLGATAALTAGMLGVPLATGTAHA. The active-site Nucleophile is the Asp-104. Catalysis depends on residues His-422, His-427, Asp-461, and Glu-470. The CBM3 domain occupies 504-652; it reads PDGPEIFVEA…GVPVWGTAPE (149 aa). Residues 647–688 form a disordered region; that stretch reads WGTAPEEGEEPGGGEGPGGGEEPGEDVTPPSAPGSPAVRDVT. Residues 678-770 enclose the Fibronectin type-III domain; it reads APGSPAVRDV…TVSFTTLAEN (93 aa). Residues 771–880 form the CBM2 domain; the sequence is GGGPDASCTV…TLNGEPCALA (110 aa).

Belongs to the glycosyl hydrolase 9 (cellulase E) family.

The enzyme catalyses Endohydrolysis of (1-&gt;4)-beta-D-glucosidic linkages in cellulose, lichenin and cereal beta-D-glucans.. Its pathway is glycan metabolism; cellulose degradation. The chain is Endoglucanase E-4 (celD) from Thermobifida fusca (Thermomonospora fusca).